A 215-amino-acid polypeptide reads, in one-letter code: Ribonuclease T (215 aa).

An Exonuclease domain is found at 20–194 (VVIDVETAGF…YDTMQTAKLF (175 aa)). Positions 23, 25, 181, and 186 each coordinate Mg(2+). His181 serves as the catalytic Proton donor/acceptor.

It belongs to the RNase T family. As to quaternary structure, homodimer. The cofactor is Mg(2+).

Trims short 3' overhangs of a variety of RNA species, leaving a one or two nucleotide 3' overhang. Responsible for the end-turnover of tRNA: specifically removes the terminal AMP residue from uncharged tRNA (tRNA-C-C-A). Also appears to be involved in tRNA biosynthesis. This Yersinia enterocolitica serotype O:8 / biotype 1B (strain NCTC 13174 / 8081) protein is Ribonuclease T.